A 123-amino-acid chain; its full sequence is MDQKKDPSNNLTERRVSKVQRPNKKKVRNQVESLSRNLERNKEGQLLQTVSKGHLEADSGHSLGREKENGELGIRSIFYDKDWNPRGTAPSHYRNIPYNPATFKRRTEVQARLGNLENIKIPK.

Residues 1 to 16 show a composition bias toward basic and acidic residues; the sequence is MDQKKDPSNNLTERRV. Residues 1–42 are disordered; it reads MDQKKDPSNNLTERRVSKVQRPNKKKVRNQVESLSRNLERNK. Residues 17 to 28 are compositionally biased toward basic residues; it reads SKVQRPNKKKVR.

This sequence belongs to the AIM4 family. In terms of assembly, may interact with the nuclear pore complex.

The protein localises to the cytoplasm. The protein is Altered inheritance of mitochondria protein 4 (AIM4) of Saccharomyces cerevisiae (strain ATCC 204508 / S288c) (Baker's yeast).